The following is a 36-amino-acid chain: Photosystem I reaction center subunit VIII (36 aa).

The helical transmembrane segment at 9–29 (ILVPLVGLIFPALSMALLFIY) threads the bilayer.

Belongs to the PsaI family.

Its subcellular location is the plastid. It localises to the chloroplast thylakoid membrane. May help in the organization of the PsaL subunit. In Pyropia yezoensis (Susabi-nori), this protein is Photosystem I reaction center subunit VIII.